The primary structure comprises 98 residues: NADH-ubiquinone oxidoreductase chain 4L (98 aa).

The next 3 helical transmembrane spans lie at 1–21 (MSMV…GLLM), 29–49 (SLLC…MVVL), and 61–81 (IILL…LVMV).

The protein belongs to the complex I subunit 4L family. As to quaternary structure, core subunit of respiratory chain NADH dehydrogenase (Complex I) which is composed of 45 different subunits.

The protein localises to the mitochondrion inner membrane. The enzyme catalyses a ubiquinone + NADH + 5 H(+)(in) = a ubiquinol + NAD(+) + 4 H(+)(out). Its function is as follows. Core subunit of the mitochondrial membrane respiratory chain NADH dehydrogenase (Complex I) which catalyzes electron transfer from NADH through the respiratory chain, using ubiquinone as an electron acceptor. Part of the enzyme membrane arm which is embedded in the lipid bilayer and involved in proton translocation. The protein is NADH-ubiquinone oxidoreductase chain 4L (MT-ND4L) of Acinonyx jubatus (Cheetah).